We begin with the raw amino-acid sequence, 684 residues long: Pentatricopeptide repeat-containing protein At4g14850 (684 aa).

PPR repeat units follow at residues serine 5–proline 39, proline 41–arginine 71, asparagine 72–proline 106, asparagine 107–leucine 141, aspartate 142–arginine 172, asparagine 173–proline 207, asparagine 208–threonine 242, aspartate 243–serine 277, tryptophan 278–threonine 308, serine 309–arginine 343, threonine 344–lysine 374, asparagine 375–proline 409, asparagine 412–threonine 442, and glycine 448–glutamine 478. The tract at residues valine 483–lysine 558 is type E motif; degenerate. The interval asparagine 559–glutamate 589 is type E(+) motif; degenerate. Residues alanine 590–tryptophan 684 are type DYW motif.

Belongs to the PPR family. PCMP-H subfamily.

Functionally, acts as a regulatory factor of isoprenoid biosynthesis. Could bind RNA. In Arabidopsis thaliana (Mouse-ear cress), this protein is Pentatricopeptide repeat-containing protein At4g14850 (LOI1).